A 276-amino-acid polypeptide reads, in one-letter code: METGRGLVELARPVNTLAAGALTFIGAFVAGGAVGRPAATGAAVGATWLATAGGNAINDYFDREVDRINDPDRAIPRGAVSPRGALAYSVVLFVGAAALAATLPVLAVCIAALNLAGLLTYTQYLKGRPGAGNALVAYLGGSTFVFGAAAVGSPLAGGVLAALAALSTFAREVIKDVEDLAGDRAAGLRTLPVVVGHQRALAVSAVFVVGAAAASPVPYLVGVFGWWYLVAVCPGVVVMVVAAARSYTDPAAGQRLLKRGQLLAAAAFVVGRLVTP.

5 helical membrane-spanning segments follow: residues 14–34 (VNTL…GGAV), 90–110 (VVLF…AVCI), 144–164 (FVFG…AALA), 200–220 (ALAV…VPYL), and 221–241 (VGVF…VMVV).

This sequence belongs to the UbiA prenyltransferase family. DGGGP synthase subfamily. Mg(2+) is required as a cofactor.

The protein resides in the cell membrane. It catalyses the reaction sn-3-O-(geranylgeranyl)glycerol 1-phosphate + (2E,6E,10E)-geranylgeranyl diphosphate = 2,3-bis-O-(geranylgeranyl)-sn-glycerol 1-phosphate + diphosphate. It functions in the pathway membrane lipid metabolism; glycerophospholipid metabolism. Functionally, prenyltransferase that catalyzes the transfer of the geranylgeranyl moiety of geranylgeranyl diphosphate (GGPP) to the C2 hydroxyl of (S)-3-O-geranylgeranylglyceryl phosphate (GGGP). This reaction is the second ether-bond-formation step in the biosynthesis of archaeal membrane lipids. This chain is Digeranylgeranylglyceryl phosphate synthase, found in Halobacterium salinarum (strain ATCC 29341 / DSM 671 / R1).